A 320-amino-acid chain; its full sequence is MNDTYQFDAAGALLSTQLPFPRRQGKVRDVYDLGDRLLIVSSDRISAFDYILPTGIPDKGRLLTAMSRFWFEQMDAGRIGQNVGSAGGDGSSNPRSISHHLISTDVPEDVAAVVDPKPLEGRVMVTRKASVVPFECVVRGYLEGSGWKEYQATGEVCGVSLPAGLKQCDQLSEAIFTPATKAEEGHDENVSYEVMSQSLGEEQSSQLRRMSLAIYQDASKIAAERGLLIADTKFEFGVVDGELMLIDEVLTPDSSRFWAADEYEPGHSQRSFDKQFVREYLQESDWDRNSPPPPLPESIAHQTADRYREGYERLVGKAFA.

Residues 283–303 are disordered; it reads ESDWDRNSPPPPLPESIAHQT.

It belongs to the SAICAR synthetase family.

It carries out the reaction 5-amino-1-(5-phospho-D-ribosyl)imidazole-4-carboxylate + L-aspartate + ATP = (2S)-2-[5-amino-1-(5-phospho-beta-D-ribosyl)imidazole-4-carboxamido]succinate + ADP + phosphate + 2 H(+). The protein operates within purine metabolism; IMP biosynthesis via de novo pathway; 5-amino-1-(5-phospho-D-ribosyl)imidazole-4-carboxamide from 5-amino-1-(5-phospho-D-ribosyl)imidazole-4-carboxylate: step 1/2. The protein is Phosphoribosylaminoimidazole-succinocarboxamide synthase of Rhodopirellula baltica (strain DSM 10527 / NCIMB 13988 / SH1).